The chain runs to 388 residues: 2-Hydroxyacid oxidase (388 aa).

The disordered stretch occupies residues 1 to 21 (MENQFKNNNNSSSIETSNQFS). An FMN hydroxy acid dehydrogenase domain is found at 26–384 (NRLDSFVSVS…NNSIIWDQNK (359 aa)). Y52 contacts glyoxylate. FMN-binding positions include 105 to 107 (PWA), S134, 156 to 158 (QLY), and T184. Y158 lines the glyoxylate pocket. Residue R193 participates in glyoxylate binding. FMN is bound by residues K255 and S277. The glyoxylate site is built by H279 and R282. The Proton acceptor role is filled by H279. FMN contacts are provided by residues 310 to 314 (DGGIR) and 333 to 334 (GR).

It belongs to the FMN-dependent alpha-hydroxy acid dehydrogenase family. As to quaternary structure, homotetramer. The cofactor is FMN.

It catalyses the reaction glycolate + O2 = glyoxylate + H2O2. It carries out the reaction a (2S)-2-hydroxycarboxylate + O2 = a 2-oxocarboxylate + H2O2. Its function is as follows. Catalyzes the oxidation of glycolate to glyoxylate, with a reduction of O2 to H2O2. May use other 2-hydroxyacids as substrates. The polypeptide is 2-Hydroxyacid oxidase (haox) (Dictyostelium discoideum (Social amoeba)).